Reading from the N-terminus, the 244-residue chain is uncharacterized protein (244 aa).

In terms of domain architecture, FCP1 homology spans 19–196 (ATDNRKLVIL…ACVIRYLKHL (178 aa)).

This is an uncharacterized protein from Schizosaccharomyces pombe (strain 972 / ATCC 24843) (Fission yeast).